The primary structure comprises 573 residues: Pentatricopeptide repeat-containing protein At3g62890 (573 aa).

10 PPR repeats span residues 23–60 (ESFL…RVSP), 61–95 (DFHT…GLDK), 96–126 (DPFV…SGSK), 127–161 (DLPA…NVIS), 162–188 (WSCL…MQLP), 198–232 (NEFT…HVEI), 233–263 (DIVL…LGSK), 265–295 (DVKA…MTTS), 301–336 (NSVT…GITP), and 337–367 (SIQH…MPME). The segment at 372-447 (IWGSLLSGSR…VPGCSYVEVE (76 aa)) is type E motif; degenerate. Residues 448–478 (GVVHEFVVGDESQQESERIYAMLDEIMQRLR) are type E(+) motif. The type DYW motif stretch occupies residues 479-573 (EAGYVTDTKE…DGSCSCRDFW (95 aa)).

It belongs to the PPR family. PCMP-H subfamily.

This chain is Pentatricopeptide repeat-containing protein At3g62890 (PCMP-H82), found in Arabidopsis thaliana (Mouse-ear cress).